The chain runs to 199 residues: Cytochrome c oxidase subunit 2 (199 aa).

Residues 1-13 (AICSLVLYLLTLM) form a helical membrane-spanning segment. Residues 14-26 (LMEKLSSNTVDAQ) are Mitochondrial matrix-facing. Residues 27 to 54 (EVELIWTILPAIVLILLALPSLQILYMM) traverse the membrane as a helical segment. Residues 55–199 (DEIDEPDLTL…SSLLSISSSL (145 aa)) are Mitochondrial intermembrane-facing. 6 residues coordinate Cu cation: His-128, Cys-163, Glu-165, Cys-167, His-171, and Met-174. Residue Glu-165 participates in Mg(2+) binding.

Belongs to the cytochrome c oxidase subunit 2 family. As to quaternary structure, component of the cytochrome c oxidase (complex IV, CIV), a multisubunit enzyme composed of 14 subunits. The complex is composed of a catalytic core of 3 subunits MT-CO1, MT-CO2 and MT-CO3, encoded in the mitochondrial DNA, and 11 supernumerary subunits COX4I, COX5A, COX5B, COX6A, COX6B, COX6C, COX7A, COX7B, COX7C, COX8 and NDUFA4, which are encoded in the nuclear genome. The complex exists as a monomer or a dimer and forms supercomplexes (SCs) in the inner mitochondrial membrane with NADH-ubiquinone oxidoreductase (complex I, CI) and ubiquinol-cytochrome c oxidoreductase (cytochrome b-c1 complex, complex III, CIII), resulting in different assemblies (supercomplex SCI(1)III(2)IV(1) and megacomplex MCI(2)III(2)IV(2)). Found in a complex with TMEM177, COA6, COX18, COX20, SCO1 and SCO2. Interacts with TMEM177 in a COX20-dependent manner. Interacts with COX20. Interacts with COX16. Requires Cu cation as cofactor.

It is found in the mitochondrion inner membrane. The enzyme catalyses 4 Fe(II)-[cytochrome c] + O2 + 8 H(+)(in) = 4 Fe(III)-[cytochrome c] + 2 H2O + 4 H(+)(out). Its function is as follows. Component of the cytochrome c oxidase, the last enzyme in the mitochondrial electron transport chain which drives oxidative phosphorylation. The respiratory chain contains 3 multisubunit complexes succinate dehydrogenase (complex II, CII), ubiquinol-cytochrome c oxidoreductase (cytochrome b-c1 complex, complex III, CIII) and cytochrome c oxidase (complex IV, CIV), that cooperate to transfer electrons derived from NADH and succinate to molecular oxygen, creating an electrochemical gradient over the inner membrane that drives transmembrane transport and the ATP synthase. Cytochrome c oxidase is the component of the respiratory chain that catalyzes the reduction of oxygen to water. Electrons originating from reduced cytochrome c in the intermembrane space (IMS) are transferred via the dinuclear copper A center (CU(A)) of subunit 2 and heme A of subunit 1 to the active site in subunit 1, a binuclear center (BNC) formed by heme A3 and copper B (CU(B)). The BNC reduces molecular oxygen to 2 water molecules using 4 electrons from cytochrome c in the IMS and 4 protons from the mitochondrial matrix. The polypeptide is Cytochrome c oxidase subunit 2 (MT-CO2) (Casuarius bennetti (Dwarf cassowary)).